The primary structure comprises 412 residues: Motilin receptor (412 aa).

At 1-35 (MGSPWNGSDGPEGAREPPWPALPPCDERRCSPFPL) the chain is on the extracellular side. The N-linked (GlcNAc...) asparagine glycan is linked to N6. Residues 36–56 (GALVPVTAVCLCLFVVGVSGN) traverse the membrane as a helical segment. The Cytoplasmic portion of the chain corresponds to 57–74 (VVTVMLIGRYRDMRTTTN). Residues 75–94 (LYLGSMAVSDLLILLGLPFD) traverse the membrane as a helical segment. Residues 95–112 (LYRLWRSRPWVFGPLLCR) lie on the Extracellular side of the membrane. Cysteines 111 and 235 form a disulfide. A helical transmembrane segment spans residues 113 to 134 (LSLYVGEGCTYATLLHMTALSV). Residues 135 to 157 (ERYLAICRPLRARVLVTRRRVRA) lie on the Cytoplasmic side of the membrane. The helical transmembrane segment at 158–178 (LIAVLWAVALLSAGPFLFLVG) threads the bilayer. Over 179-246 (VEQDPGISVV…PSPAQLGALR (68 aa)) the chain is Extracellular. A glycan (N-linked (GlcNAc...) asparagine) is linked at N192. Residues 247 to 270 (VMLWVTTAYFFLPFLCLSILYGLI) traverse the membrane as a helical segment. Residues 271-298 (GRELWSSRRPLRGPAASGRERGHRQTVR) lie on the Cytoplasmic side of the membrane. The helical transmembrane segment at 299–320 (VLLVVVLAFIICWLPFHVGRII) threads the bilayer. Over 321–334 (YINTEDSRMMYFSQ) the chain is Extracellular. Residues 335 to 358 (YFNIVALQLFYLSASINPILYNLI) traverse the membrane as a helical segment. Topologically, residues 359-412 (SKKYRAAAFKLLLARKSRPRGFHRSRDTAGEVAGDTGGDTVGYTETSANVKTMG) are cytoplasmic.

The protein belongs to the G-protein coupled receptor 1 family. Expressed only in thyroid, stomach, and bone marrow.

Its subcellular location is the cell membrane. Functionally, receptor for motilin. The sequence is that of Motilin receptor (MLNR) from Homo sapiens (Human).